The following is a 196-amino-acid chain: Large ribosomal subunit protein uL11m (196 aa).

Belongs to the universal ribosomal protein uL11 family. In terms of assembly, component of the mitochondrial ribosome large subunit (39S) which comprises a 16S rRNA and about 50 distinct proteins.

The protein localises to the mitochondrion. The polypeptide is Large ribosomal subunit protein uL11m (mRpL11) (Drosophila melanogaster (Fruit fly)).